The chain runs to 67 residues: Nigrocin-2GRc (67 aa).

Residues 1–22 (MFTMKKSMLLLFFLGTISLSLC) form the signal peptide. Residues 23–46 (EQERNADEEERRDEEVAKMEEIKR) constitute a propeptide that is removed on maturation. The cysteines at positions 61 and 67 are disulfide-linked.

In terms of tissue distribution, expressed by the skin glands.

Its subcellular location is the secreted. In terms of biological role, antimicrobial peptide active at least against the Gram-positive bacterium S.aureus but with otherwise unclear activity spectrum. Lacks hemolytic activity against rabbit or human erythrocytes. This Odorrana grahami (Yunnanfu frog) protein is Nigrocin-2GRc.